We begin with the raw amino-acid sequence, 261 residues long: ATP synthase subunit a (261 aa).

Helical transmembrane passes span I31–M51, W64–G84, L97–V117, L126–W146, I166–L188, V201–P223, and E235–N255.

The protein belongs to the ATPase A chain family. In terms of assembly, F-type ATPases have 2 components, CF(1) - the catalytic core - and CF(0) - the membrane proton channel. CF(1) has five subunits: alpha(3), beta(3), gamma(1), delta(1), epsilon(1). CF(0) has three main subunits: a(1), b(2) and c(9-12). The alpha and beta chains form an alternating ring which encloses part of the gamma chain. CF(1) is attached to CF(0) by a central stalk formed by the gamma and epsilon chains, while a peripheral stalk is formed by the delta and b chains.

It localises to the cell inner membrane. Functionally, key component of the proton channel; it plays a direct role in the translocation of protons across the membrane. This is ATP synthase subunit a from Rhizorhabdus wittichii (strain DSM 6014 / CCUG 31198 / JCM 15750 / NBRC 105917 / EY 4224 / RW1) (Sphingomonas wittichii).